The sequence spans 244 residues: MSLLDLNALNDLPKVERILALAETNAKLEKLDAEGRVAWALENLPGEYALSSSFGIQAAVSLHLVNTIRPDIPVILTDTGYLFPETYQFIDELADKLKLNLKVYRAEQSAAWQEARYGKLWEQGVEGIEKYNDINKVEPMNRALEELNVKTWFAGLRREQSGSRASLPVLGIQRGVFKVLPIIDWDNRTVYQYLQKHGLKYHPLWDQGYLSVGDTHTTRKWEPGMAEEETRFFGLKRECGLHEG.

The Nucleophile; cysteine thiosulfonate intermediate role is filled by Cys239.

This sequence belongs to the PAPS reductase family. CysH subfamily.

The protein resides in the cytoplasm. The enzyme catalyses [thioredoxin]-disulfide + sulfite + adenosine 3',5'-bisphosphate + 2 H(+) = [thioredoxin]-dithiol + 3'-phosphoadenylyl sulfate. The protein operates within sulfur metabolism; hydrogen sulfide biosynthesis; sulfite from sulfate: step 3/3. Functionally, catalyzes the formation of sulfite from phosphoadenosine 5'-phosphosulfate (PAPS) using thioredoxin as an electron donor. The polypeptide is Phosphoadenosine 5'-phosphosulfate reductase (Enterobacter sp. (strain 638)).